The primary structure comprises 660 residues: Poly(A)-specific ribonuclease PARN (660 aa).

The a divalent metal cation site is built by D28 and E30. One can recognise an R3H domain in the interval R177 to D243. 2 residues coordinate a divalent metal cation: D290 and D380. Residues S560 and S614 each carry the phosphoserine modification. The tract at residues A606–W660 is disordered. Over residues K633–K642 the composition is skewed to basic residues. Residue S643 is modified to Phosphoserine. The residue at position 649 (T649) is a Phosphothreonine.

Belongs to the CAF1 family. The cofactor is a divalent metal cation.

It is found in the cytoplasm. Its subcellular location is the nucleus. The catalysed reaction is Exonucleolytic cleavage of poly(A) to 5'-AMP.. Functionally, 3'-exoribonuclease that has a preference for poly(A) tails of mRNAs, thereby efficiently degrading poly(A) tails. Exonucleolytic degradation of the poly(A) tail is often the first step in the decay of eukaryotic mRNAs and is also used to silence certain maternal mRNAs translationally during oocyte maturation and early embryonic development. The protein is Poly(A)-specific ribonuclease PARN (parn) of Danio rerio (Zebrafish).